Reading from the N-terminus, the 451-residue chain is Exodeoxyribonuclease 7 large subunit (451 aa).

It belongs to the XseA family. In terms of assembly, heterooligomer composed of large and small subunits.

It localises to the cytoplasm. The enzyme catalyses Exonucleolytic cleavage in either 5'- to 3'- or 3'- to 5'-direction to yield nucleoside 5'-phosphates.. Bidirectionally degrades single-stranded DNA into large acid-insoluble oligonucleotides, which are then degraded further into small acid-soluble oligonucleotides. This chain is Exodeoxyribonuclease 7 large subunit, found in Bacillus cytotoxicus (strain DSM 22905 / CIP 110041 / 391-98 / NVH 391-98).